The primary structure comprises 497 residues: Lysine--tRNA ligase (497 aa).

Residues glutamate 409 and glutamate 416 each coordinate Mg(2+).

The protein belongs to the class-II aminoacyl-tRNA synthetase family. As to quaternary structure, homodimer. The cofactor is Mg(2+).

It is found in the cytoplasm. It carries out the reaction tRNA(Lys) + L-lysine + ATP = L-lysyl-tRNA(Lys) + AMP + diphosphate. This is Lysine--tRNA ligase from Streptococcus pyogenes serotype M49 (strain NZ131).